The chain runs to 121 residues: Large ribosomal subunit protein bL20 (121 aa).

This sequence belongs to the bacterial ribosomal protein bL20 family.

In terms of biological role, binds directly to 23S ribosomal RNA and is necessary for the in vitro assembly process of the 50S ribosomal subunit. It is not involved in the protein synthesizing functions of that subunit. The polypeptide is Large ribosomal subunit protein bL20 (Polynucleobacter asymbioticus (strain DSM 18221 / CIP 109841 / QLW-P1DMWA-1) (Polynucleobacter necessarius subsp. asymbioticus)).